Here is a 451-residue protein sequence, read N- to C-terminus: Enolase (451 aa).

A (2R)-2-phosphoglycerate-binding site is contributed by glutamine 163. Glutamate 205 acts as the Proton donor in catalysis. Mg(2+) contacts are provided by aspartate 258, glutamate 308, and aspartate 335. 4 residues coordinate (2R)-2-phosphoglycerate: lysine 360, arginine 389, serine 390, and lysine 411. The Proton acceptor role is filled by lysine 360.

Belongs to the enolase family. It depends on Mg(2+) as a cofactor.

The protein localises to the cytoplasm. It is found in the secreted. It localises to the cell surface. The catalysed reaction is (2R)-2-phosphoglycerate = phosphoenolpyruvate + H2O. It participates in carbohydrate degradation; glycolysis; pyruvate from D-glyceraldehyde 3-phosphate: step 4/5. Catalyzes the reversible conversion of 2-phosphoglycerate (2-PG) into phosphoenolpyruvate (PEP). It is essential for the degradation of carbohydrates via glycolysis. The sequence is that of Enolase from Mycoplasma mycoides subsp. mycoides SC (strain CCUG 32753 / NCTC 10114 / PG1).